A 212-amino-acid chain; its full sequence is MRSLSRTDQVISSLDKALSTVFAAHSASRPAPKPAVDPGLAMTPQDKSLSASLMRVNHVGEVCAQALYASQALGTRNETLRAQFEHAAREETDHLAWTEARLAELNGRTSWLNPLWYAGAFGLGLIAGRLGDAASLGFVVETERQVEQHLLQHLDRLPVADVESRAIVAQMREDEARHAAAAEHAGAATLPVPVRWMMRGMAKLMTSTAHRI.

Residues E61, E91, H94, E143, E175, and H178 each contribute to the Fe cation site.

The protein belongs to the COQ7 family. It depends on Fe cation as a cofactor.

The protein localises to the cell membrane. It catalyses the reaction a 5-methoxy-2-methyl-3-(all-trans-polyprenyl)benzene-1,4-diol + AH2 + O2 = a 3-demethylubiquinol + A + H2O. The protein operates within cofactor biosynthesis; ubiquinone biosynthesis. Functionally, catalyzes the hydroxylation of 2-nonaprenyl-3-methyl-6-methoxy-1,4-benzoquinol during ubiquinone biosynthesis. The sequence is that of 3-demethoxyubiquinol 3-hydroxylase from Methylibium petroleiphilum (strain ATCC BAA-1232 / LMG 22953 / PM1).